A 199-amino-acid chain; its full sequence is Recombination protein RecR (199 aa).

Residues 57 to 72 form a C4-type zinc finger; that stretch reads CQACRTFTEETLCPIC. Residues 81 to 176 enclose the Toprim domain; the sequence is EVICVVETPA…SVSRIAHGVP (96 aa).

It belongs to the RecR family.

May play a role in DNA repair. It seems to be involved in an RecBC-independent recombinational process of DNA repair. It may act with RecF and RecO. The protein is Recombination protein RecR of Shewanella woodyi (strain ATCC 51908 / MS32).